A 223-amino-acid chain; its full sequence is Kinetochore protein Spc25 (223 aa).

Residues 65–115 (LRCGELEKRANFMEELTQELEATKQRNLVMRDQIKQLNVLARQHRNEVMES) are a coiled coil.

The protein belongs to the SPC25 family. As to quaternary structure, component of the Ndc80 complex, which is composed of Ndc80, Nuf2 and Spc25.

It localises to the nucleus. The protein localises to the chromosome. The protein resides in the centromere. It is found in the kinetochore. Acts as a component of the essential kinetochore-associated Ndc80 complex, which is required for chromosome segregation and spindle checkpoint activity during meiosis and mitosis. Required for kinetochore integrity and the organization of stable microtubule binding sites in the outer plate of the kinetochore. Participates in SAC signaling that responds specifically to disruptions in spindle microtubule dynamics. The NDC80 complex synergistically enhances the affinity of the SKA1 complex for microtubules and may allow the NDC80 complex to track depolymerizing microtubules. This Drosophila lutescens (Fruit fly) protein is Kinetochore protein Spc25.